A 156-amino-acid polypeptide reads, in one-letter code: Ribosomal RNA large subunit methyltransferase H (156 aa).

S-adenosyl-L-methionine is bound by residues Leu73, Gly104, and 123 to 128; that span reads LSPLTL.

The protein belongs to the RNA methyltransferase RlmH family. Homodimer.

It is found in the cytoplasm. The catalysed reaction is pseudouridine(1915) in 23S rRNA + S-adenosyl-L-methionine = N(3)-methylpseudouridine(1915) in 23S rRNA + S-adenosyl-L-homocysteine + H(+). Functionally, specifically methylates the pseudouridine at position 1915 (m3Psi1915) in 23S rRNA. The protein is Ribosomal RNA large subunit methyltransferase H of Sodalis glossinidius (strain morsitans).